The primary structure comprises 670 residues: Transketolase, chromosomal (670 aa).

His32 contacts substrate. Residues His72 and 120–122 contribute to the thiamine diphosphate site; that span reads GPL. Asp161 lines the Mg(2+) pocket. Thiamine diphosphate is bound by residues Gly162 and Asn191. Positions 191 and 193 each coordinate Mg(2+). Substrate-binding residues include His267, Arg364, and Ser391. A thiamine diphosphate-binding site is contributed by His267. Glu417 acts as the Proton donor in catalysis. Residue Phe443 coordinates thiamine diphosphate. Substrate contacts are provided by His467, Asp475, and Arg526.

Belongs to the transketolase family. In terms of assembly, homodimer. Mg(2+) serves as cofactor. It depends on Ca(2+) as a cofactor. Requires Mn(2+) as cofactor. Co(2+) is required as a cofactor. The cofactor is thiamine diphosphate.

It catalyses the reaction D-sedoheptulose 7-phosphate + D-glyceraldehyde 3-phosphate = aldehydo-D-ribose 5-phosphate + D-xylulose 5-phosphate. It functions in the pathway carbohydrate biosynthesis; Calvin cycle. In terms of biological role, catalyzes the transfer of a two-carbon ketol group from a ketose donor to an aldose acceptor, via a covalent intermediate with the cofactor thiamine pyrophosphate. The sequence is that of Transketolase, chromosomal (cbbTC) from Cupriavidus necator (strain ATCC 17699 / DSM 428 / KCTC 22496 / NCIMB 10442 / H16 / Stanier 337) (Ralstonia eutropha).